A 1088-amino-acid polypeptide reads, in one-letter code: RNA-directed RNA polymerase (1088 aa).

The RdRp catalytic domain maps to 501 to 687; sequence LSYGDVTRFL…AKRYIAGGKI (187 aa).

The protein belongs to the reoviridae RNA-directed RNA polymerase family. In terms of assembly, interacts with VP3 (Potential). Interacts with VP2; this interaction activates VP1. Interacts with NSP5; this interaction is probably necessary for the formation of functional virus factories. Interacts with NSP2; this interaction is weak. Mg(2+) is required as a cofactor.

It localises to the virion. The enzyme catalyses RNA(n) + a ribonucleoside 5'-triphosphate = RNA(n+1) + diphosphate. Its function is as follows. RNA-directed RNA polymerase that is involved in both transcription and genome replication. Together with VP3 capping enzyme, forms an enzyme complex positioned near the channels situated at each of the five-fold vertices of the core. Following infection, the outermost layer of the virus is lost, leaving a double-layered particle (DLP) made up of the core and VP6 shell. VP1 then catalyzes the transcription of fully conservative plus-strand genomic RNAs that are extruded through the DLP's channels into the cytoplasm where they function as mRNAs for translation of viral proteins. One copy of each of the viral (+)RNAs is also recruited during core assembly, together with newly synthesized polymerase complexes and VP2. The polymerase of these novo-formed particles catalyzes the synthesis of complementary minus-strands leading to dsRNA formation. To do so, the polymerase specifically recognizes and binds 4 bases 5'-UGUG-3' in the conserved 3'-sequence of plus-strand RNA templates. VP2 presumably activates the autoinhibited VP1-RNA complex to coordinate packaging and genome replication. Once dsRNA synthesis is complete, the polymerase switches to the transcriptional mode, thus providing secondary transcription. The polypeptide is RNA-directed RNA polymerase (Sus scrofa (Pig)).